Reading from the N-terminus, the 297-residue chain is Small ribosomal subunit protein uS9m (297 aa).

The disordered stretch occupies residues 278–297 (VERKKPGKRKARKMPTWVKR).

It belongs to the universal ribosomal protein uS9 family.

Its subcellular location is the mitochondrion. This chain is Small ribosomal subunit protein uS9m (MRPS9), found in Kluyveromyces lactis (strain ATCC 8585 / CBS 2359 / DSM 70799 / NBRC 1267 / NRRL Y-1140 / WM37) (Yeast).